A 1473-amino-acid polypeptide reads, in one-letter code: MHCFLGREILSFFCLTVRKMWLKFILAILLLHAAAGKEPEPQYVLMVPAVLQSDSPSQVCLQFFNLNQTISVRVVLEYDTINTTIFEKNTTTSNGLQCLNFMIPPVTSVSLAFISFTAKGTTFDLKERRSVMIWNMESFVFVQTDKPIYKPGQSVMFRVVALDFNFKPVQEMYPLIAVQDPQNNRIFQWQNVTSEINIVQIEFPLTEEPILGNYKIIVTKKSGERTSHSFLVEEYVLPKFDVTVTAPGSLTVMDSELTVKICAVYTYGQPVEGKVQLSVCRDFDSYGRCKKSPVCQSFTKDLDTDGCLSHILSSKVFELNRIGYKRNLDVKAIVTEKEQVCNLTATQSISITQVMSSLQFENVDHHYRRGIPYFGQIKLVDKDNSPISNKVIQLFVNNKNTHNFTTDINGIAPFSIDTSKIFDPELSLKALYKTSDQCHSEGWIEPSYPDASLSVQRLYSWTSSFVRIEPLWKDMSCGQKRMITVYYILNTEGYEHINIVNFYYVGMAKGKIVLTGEIKVNIQADQNGTFMIPLVVNEKMAPALRLLVYMLHPAKELVADSVRFSIEKCFKNKVQLQFSEKQMLTTSNVSLVIEAAANSFCAVRAVDKSMLLLKSETELSAETIYNLHPIQDLQGYIFNGLNLEDDPQDPCVSSDDIFHKGLYYRPLTSGLGPDVYQFLRDMGMKFFTNSKIRQPTVCTRETVRPPSYFLNAGFTASTHHVKLSAEVAREERGKRHILETIREFFPETWIWDIILINSTGKASVSYTIPDTITEWKASAFCVEELAGFGMSVPATLTAFQPFFVDLTLPYSIIHGEDFLVRANVFNYLNHCIKINVLLLESLDYQAKLISPEDDGCVCAKIRKSYVWNIFPKGTGDVLFSITAETNDDEACEEEALRNIRIDYRDTQIRALLVEPEGIRREETQNFLICMKDDVISQDVAIDLPTNVVEGSPRPSFSVVGDIMGTAIQNVHQLLQMPFGNGEQNMVLFAPNIYVLDYLDKTRQLSEDVKSKTIGYLVSGYQKQLSYKHPDGSYSTFGIRDKEGNTWLTAFVYKSFAEASRFIYIDDNVQAQTLIWLATKQKTDGCFQSTGILVNNAMKGGVENELSLSAYITIALLEAGHSMSHTVIRNAFYCLETASEKNITDIYTQALVAYAFCLAGKAEICESFLRELQKSAKEVDGSKYWEQNQRSAPEKSHLLDHVQSTDVEITSYVLLALLYKPNRSQEDLTKASAIVQWIIRQQNSYGGFASMQDTVVALQALAAYGAATYNSVTQNVIKINSKNTFEKVFTVNNENRLLLQQTPLPQVPGKYSLTVNGTGCVLIQTALRYNIHLPEGAFGFSLSVQTSNASCPRDQPGKFDIVLISSYTGKRSSSNMVIIDVKMLSGFVPVKSSLDQLIDDHTVMQVEYKKNHVLLYLGNILQKRRKEVTFSVEQDFVVTHPKPAPVQIYDYYETEEYAVAEYMSLCRGVVEEMG.

The N-terminal stretch at 1 to 36 is a signal peptide; it reads MHCFLGREILSFFCLTVRKMWLKFILAILLLHAAAG. N-linked (GlcNAc...) asparagine glycosylation is found at asparagine 67, asparagine 82, asparagine 89, asparagine 191, asparagine 342, asparagine 403, asparagine 527, asparagine 588, asparagine 757, asparagine 1141, asparagine 1221, asparagine 1315, and asparagine 1347.

Belongs to the protease inhibitor I39 (alpha-2-macroglobulin) family. In terms of assembly, homotetramer, which consists of two pairs of disulfide-linked chains. Post-translationally, lacks the thioester bond found in other members of this family. In terms of processing, glycosylated; contains 56 glucosamine units per subunit.

Its subcellular location is the secreted. In terms of biological role, is able to inhibit all four classes of proteinases by a unique 'trapping' mechanism. This protein has a peptide stretch, called the 'bait region' which contains specific cleavage sites for different proteinases. When a proteinase cleaves the bait region, a conformational change is induced in the protein which traps the proteinase. The entrapped enzyme remains active against low molecular weight substrates (activity against high molecular weight substrates is greatly reduced). The sequence is that of Ovostatin from Gallus gallus (Chicken).